A 254-amino-acid chain; its full sequence is Imidazole glycerol phosphate synthase subunit HisF (254 aa).

Catalysis depends on residues aspartate 14 and aspartate 133.

Belongs to the HisA/HisF family. As to quaternary structure, heterodimer of HisH and HisF.

The protein localises to the cytoplasm. It carries out the reaction 5-[(5-phospho-1-deoxy-D-ribulos-1-ylimino)methylamino]-1-(5-phospho-beta-D-ribosyl)imidazole-4-carboxamide + L-glutamine = D-erythro-1-(imidazol-4-yl)glycerol 3-phosphate + 5-amino-1-(5-phospho-beta-D-ribosyl)imidazole-4-carboxamide + L-glutamate + H(+). It functions in the pathway amino-acid biosynthesis; L-histidine biosynthesis; L-histidine from 5-phospho-alpha-D-ribose 1-diphosphate: step 5/9. Functionally, IGPS catalyzes the conversion of PRFAR and glutamine to IGP, AICAR and glutamate. The HisF subunit catalyzes the cyclization activity that produces IGP and AICAR from PRFAR using the ammonia provided by the HisH subunit. In Nitratiruptor sp. (strain SB155-2), this protein is Imidazole glycerol phosphate synthase subunit HisF.